Consider the following 324-residue polypeptide: tRNA pseudouridine synthase B (324 aa).

Asp49 functions as the Nucleophile in the catalytic mechanism.

It belongs to the pseudouridine synthase TruB family. Type 1 subfamily.

The enzyme catalyses uridine(55) in tRNA = pseudouridine(55) in tRNA. Functionally, responsible for synthesis of pseudouridine from uracil-55 in the psi GC loop of transfer RNAs. This Tolumonas auensis (strain DSM 9187 / NBRC 110442 / TA 4) protein is tRNA pseudouridine synthase B.